The chain runs to 175 residues: Endoribonuclease YbeY (175 aa).

Positions 129, 133, and 139 each coordinate Zn(2+).

Belongs to the endoribonuclease YbeY family. The cofactor is Zn(2+).

It localises to the cytoplasm. Functionally, single strand-specific metallo-endoribonuclease involved in late-stage 70S ribosome quality control and in maturation of the 3' terminus of the 16S rRNA. The polypeptide is Endoribonuclease YbeY (Lactobacillus gasseri (strain ATCC 33323 / DSM 20243 / BCRC 14619 / CIP 102991 / JCM 1131 / KCTC 3163 / NCIMB 11718 / NCTC 13722 / AM63)).